The following is a 152-amino-acid chain: Small ribosomal subunit protein bS6 (152 aa).

The segment at 94-152 is disordered; the sequence is VKQEGPLPTPKPSNKSSTQSENKDNPETKVESKEEQSVTNSDTSTTKKDDNEIKENTES. Basic and acidic residues-rich tracts occupy residues 114 to 129 and 138 to 152; these read ENKD…KEEQ and TTKK…NTES.

Belongs to the bacterial ribosomal protein bS6 family.

Binds together with bS18 to 16S ribosomal RNA. This chain is Small ribosomal subunit protein bS6, found in Prochlorococcus marinus (strain MIT 9312).